The sequence spans 718 residues: Sodium/myo-inositol cotransporter (718 aa).

Residues 1-9 lie on the Extracellular side of the membrane; the sequence is MRAVLEAAD. The chain crosses the membrane as a helical span at residues 10-29; that stretch reads IAVVALYFILVMCIGFFAMW. Topologically, residues 30–38 are cytoplasmic; sequence KSNRSTVSG. Residues 39–57 form a helical membrane-spanning segment; that stretch reads YFLAGRSMTWVAIGASLFV. Residues 58–86 lie on the Extracellular side of the membrane; sequence SNIGSEHFIGLAGSGAASGFAVGAWEFNA. Residues 87–110 traverse the membrane as a helical segment; sequence LLLLQLLGWVFIPIYIRSGVYTMP. The Cytoplasmic portion of the chain corresponds to 111-123; it reads EYLSKRFGGHRIQ. Residues 124 to 144 traverse the membrane as a helical segment; the sequence is VYFAALSLLLYIFTKLSVDLY. The Extracellular segment spans residues 145-157; the sequence is SGALFIQESLGWN. A helical membrane pass occupies residues 158-183; sequence LYVSVILLIGMTALLTVTGGLVAVIY. Topologically, residues 184-186 are cytoplasmic; that stretch reads TDT. A helical transmembrane segment spans residues 187 to 205; sequence LQALLMIIGALTLMVISMV. At 206–303 the chain is on the extracellular side; the sequence is KIGGFEEVKR…HAKGSTLMAG (98 aa). N-linked (GlcNAc...) asparagine glycosylation is present at asparagine 232. The chain crosses the membrane as a helical span at residues 304–324; sequence FLKLLPMFIIVVPGMISRIVF. Residues 325 to 353 are Cytoplasmic-facing; sequence ADEIACINPEHCMQVCGSRAGCSNIAYPR. Residues 354–376 traverse the membrane as a helical segment; sequence LVMTLVPVGLRGLMMAVMIAALM. The Extracellular segment spans residues 377–406; the sequence is SDLDSIFNSASTIFTLDVYKLIRKSASSRE. The helical transmembrane segment at 407–430 threads the bilayer; sequence LMIVGRIFVAFMVVISIAWVPIIV. Residues 431 to 443 lie on the Cytoplasmic side of the membrane; that stretch reads EMQGGQMYLYIQE. The helical transmembrane segment at 444–462 threads the bilayer; sequence VADYLTPPVAALFLLAIFW. Residues 463 to 510 are Extracellular-facing; the sequence is KRCNEQGAFYGGMAGFVLGAVRLILAFTYRAPECDQPDNRPGFIKDIH. A helical membrane pass occupies residues 511-532; the sequence is YMYVATALFWITGLITVIVSLL. Residues 533 to 695 lie on the Cytoplasmic side of the membrane; sequence TPPPTKDQIR…QMLEETPQVK (163 aa). A phosphoserine mark is found at serine 594 and serine 632. Residues 696–716 traverse the membrane as a helical segment; it reads VILNIGLFAVCSLGIFMFVYF. Residues 717-718 are Extracellular-facing; the sequence is SL.

This sequence belongs to the sodium:solute symporter (SSF) (TC 2.A.21) family. As to quaternary structure, interacts with KCNQ2 (via the pore module). Interacts with KCNQ1; this interaction is direct. Forms coregulatory complexes with ion channels KCNQ2-KCNQ3 and KCNQ1-KCNE2. As to expression, highly expressed in kidney, placenta, and brain and at a lesser extent in thymus, lung, bladder, and testes. Expressed in the choroid plexus epithelium (at protein level).

The protein resides in the apical cell membrane. The protein localises to the basolateral cell membrane. The enzyme catalyses myo-inositol(out) + 2 Na(+)(out) = myo-inositol(in) + 2 Na(+)(in). It catalyses the reaction scyllo-inositol(out) + 2 Na(+)(out) = scyllo-inositol(in) + 2 Na(+)(in). In terms of biological role, electrogenic Na(+)-coupled sugar symporter that actively transports myo-inositol and its stereoisomer scyllo-inositol across the plasma membrane, with a Na(+) to sugar coupling ratio of 2:1. Maintains myo-inositol concentration gradient that defines cell volume and fluid balance during osmotic stress, in particular in the fetoplacental unit and central nervous system. Forms coregulatory complexes with voltage-gated K(+) ion channels, allosterically altering ion selectivity, voltage dependence and gating kinetics of the channel. In turn, K(+) efflux through the channel forms a local electrical gradient that modulates electrogenic Na(+)-coupled myo-inositol influx through the transporter. Associates with KCNQ1-KCNE2 channel in the apical membrane of choroid plexus epithelium and regulates the myo-inositol gradient between blood and cerebrospinal fluid with an impact on neuron excitability. Associates with KCNQ2-KCNQ3 channel altering ion selectivity, increasing Na(+) and Cs(+) permeation relative to K(+) permeation. Provides myo-inositol precursor for biosynthesis of phosphoinositides such as PI(4,5)P2, thus indirectly affecting the activity of phosphoinositide-dependent ion channels and Ca(2+) signaling upon osmotic stress. (Microbial infection) Functions as a retroviral receptor for M813 murine leukemia virus (MuLV) entry. This chain is Sodium/myo-inositol cotransporter (Slc5a3), found in Mus musculus (Mouse).